The primary structure comprises 372 residues: Actin-related protein 2/3 complex subunit 1B (372 aa).

WD repeat units lie at residues 6 to 45, 50 to 89, 94 to 135, 140 to 179, 242 to 280, and 324 to 367; these read FLVE…WVQV, EHNG…WKPT, RINR…WVCK, PIRS…VEER, SETL…GKLS, and LHKN…SALK.

It belongs to the WD repeat ARPC1 family. As to quaternary structure, component of the Arp2/3 complex composed of ACTR2/ARP2, ACTR3/ARP3, ARPC1B/p41-ARC, ARPC2/p34-ARC, ARPC3/p21-ARC, ARPC4/p20-ARC and ARPC5/p16-ARC.

It is found in the cytoplasm. Its subcellular location is the cytoskeleton. The protein localises to the nucleus. In terms of biological role, component of the Arp2/3 complex, a multiprotein complex that mediates actin polymerization upon stimulation by nucleation-promoting factor (NPF). The Arp2/3 complex mediates the formation of branched actin networks in the cytoplasm, providing the force for cell motility. In addition to its role in the cytoplasmic cytoskeleton, the Arp2/3 complex also promotes actin polymerization in the nucleus, thereby regulating gene transcription and repair of damaged DNA. The Arp2/3 complex promotes homologous recombination (HR) repair in response to DNA damage by promoting nuclear actin polymerization, leading to drive motility of double-strand breaks (DSBs). This chain is Actin-related protein 2/3 complex subunit 1B (ARPC1B), found in Bos taurus (Bovine).